Here is a 350-residue protein sequence, read N- to C-terminus: MGVNIREVIPPEAIQEIDLAHLKYKVVAIDAYNALYQFLTAIRQPDGTPLMDSKGRITSHLSGLFYRTINLMEHGIKIVYVFDGKPPEMKYLEIERRKRVKSEAVKKYEEAVKKGDTKAARRYAQMAARLTDEMVEDAKKLLDAMGVPWVQAPAEGEAQAAFMARRGDAWAAASQDYDSLLFGSPRLVRNLAITGRRKLPRKDVYVEIKPELIELDKLLKALGITREQLVALGILIGTDYNPDGVKGIGPKTALKMVKAHRDPVKLLQGLPRHEFPTDPLKIYEYFLNPPVTTDYKLEWREPDEKKVFEILVEGHDFSPERVRNALERLKKAYREHFRGQQMGLDAWLRR.

An N-domain region spans residues 1–101 (MGVNIREVIP…LEIERRKRVK (101 aa)). 7 residues coordinate Mg(2+): D30, D83, E155, E157, D176, D178, and D239. Positions 119–261 (AARRYAQMAA…TALKMVKAHR (143 aa)) are I-domain. An interaction with PCNA region spans residues 340-348 (QQMGLDAWL).

This sequence belongs to the XPG/RAD2 endonuclease family. FEN1 subfamily. Interacts with PCNA. PCNA stimulates the nuclease activity without altering cleavage specificity. Requires Mg(2+) as cofactor.

Its function is as follows. Structure-specific nuclease with 5'-flap endonuclease and 5'-3' exonuclease activities involved in DNA replication and repair. During DNA replication, cleaves the 5'-overhanging flap structure that is generated by displacement synthesis when DNA polymerase encounters the 5'-end of a downstream Okazaki fragment. Binds the unpaired 3'-DNA end and kinks the DNA to facilitate 5' cleavage specificity. Cleaves one nucleotide into the double-stranded DNA from the junction in flap DNA, leaving a nick for ligation. Also involved in the base excision repair (BER) pathway. Acts as a genome stabilization factor that prevents flaps from equilibrating into structures that lead to duplications and deletions. Also possesses 5'-3' exonuclease activity on nicked or gapped double-stranded DNA. The sequence is that of Flap endonuclease 1 from Hyperthermus butylicus (strain DSM 5456 / JCM 9403 / PLM1-5).